The sequence spans 84 residues: Large ribosomal subunit protein bL27 (84 aa).

A disordered region spans residues 1 to 27; it reads MAHKKGQGASRNGRDSKSKRLGVKVGA.

It belongs to the bacterial ribosomal protein bL27 family.

The chain is Large ribosomal subunit protein bL27 from Chlamydia pneumoniae (Chlamydophila pneumoniae).